The primary structure comprises 894 residues: Leucine--tRNA ligase, mitochondrial (894 aa).

Residues 1 to 9 (MLSRPSSRF) constitute a mitochondrion transit peptide. The short motif at 56 to 66 (PYPSGALHIGH) is the 'HIGH' region element. Residues 646-650 (KMSKS) carry the 'KMSKS' region motif. Lys649 is a binding site for ATP.

The protein belongs to the class-I aminoacyl-tRNA synthetase family.

The protein localises to the mitochondrion matrix. It carries out the reaction tRNA(Leu) + L-leucine + ATP = L-leucyl-tRNA(Leu) + AMP + diphosphate. Functionally, catalyzes the attachment of leucine to tRNA(Leu) in the mitochondrion. The chain is Leucine--tRNA ligase, mitochondrial (NAM2) from Saccharomyces cerevisiae (strain ATCC 204508 / S288c) (Baker's yeast).